We begin with the raw amino-acid sequence, 399 residues long: F-box protein At1g10110 (399 aa).

Positions 9–56 constitute an F-box domain; it reads PNWSELVTDILSLVFKHLSFTDFARAKTVCSSWYFASKSSSPRKNHTP.

This chain is F-box protein At1g10110, found in Arabidopsis thaliana (Mouse-ear cress).